We begin with the raw amino-acid sequence, 267 residues long: Kafirin PSKR2 (267 aa).

Residues 1-21 (MATKIFVLLALLALSVSTTTA) form the signal peptide.

It belongs to the zein family.

Major seed storage prolamin. This chain is Kafirin PSKR2, found in Sorghum bicolor (Sorghum).